The primary structure comprises 259 residues: Probable ABC transporter permease protein RT0041 (259 aa).

5 consecutive transmembrane segments (helical) span residues 20-40, 49-69, 148-168, 195-215, and 237-257; these read VGIFALFSFIAISSIIKPPLY, LFIGFHSLPVVAMTTFFSGAV, VIAAIITMPCLVLIGDVIGVM, LIDVISGLVKATVFGFIISII, and AVVNSSILILISNYLITELLF.

The protein belongs to the MlaE permease family.

It is found in the cell inner membrane. Functionally, could be part of an ABC transporter complex. This Rickettsia typhi (strain ATCC VR-144 / Wilmington) protein is Probable ABC transporter permease protein RT0041.